The primary structure comprises 263 residues: Transmembrane protein 176B (263 aa).

A run of 4 helical transmembrane segments spans residues 61-81 (LGVT…CLYF), 89-109 (ASGC…GIVI), 125-145 (LLLA…KSLI), and 197-217 (LFLA…VVSV). The segment at 242-263 (KKLLGGDSAPASPTKEKIPVTP) is disordered. Phosphoserine is present on residues serine 249 and serine 253.

It belongs to the TMEM176 family. As to expression, expressed in spleen by a variety of myeloid cells including macrophages and dendritic cells (at protein level). Ubiquitously expressed with higher expression in lymphoid tissues.

It is found in the nucleus membrane. Functionally, required for the development of cerebellar granule cells. May play a role in the process of maturation of dendritic cells. The polypeptide is Transmembrane protein 176B (Tmem176b) (Rattus norvegicus (Rat)).